Reading from the N-terminus, the 932-residue chain is Lon protease homolog 2, peroxisomal (932 aa).

Positions 11-260 (LSLVPLPKGS…RVVDILNKQN (250 aa)) constitute a Lon N-terminal domain. The interval 298–328 (RRGIPGASGTPPPGLGGRNNEADEKESNELD) is disordered. A compositionally biased stretch (basic and acidic residues) spans 317–328 (NEADEKESNELD). ATP is bound at residue 486–493 (GPPGTGKT). Positions 729–916 (HGRPGVVTGL…WEAIRHIWPD (188 aa)) constitute a Lon proteolytic domain. Catalysis depends on residues Ser822 and Lys865. The Microbody targeting signal signature appears at 930–932 (SRL).

The protein belongs to the peptidase S16 family.

It is found in the peroxisome matrix. The catalysed reaction is Hydrolysis of proteins in presence of ATP.. ATP-dependent serine protease that mediates the selective degradation of misfolded and unassembled polypeptides in the peroxisomal matrix. Necessary for type 2 peroxisome targeting signal (PTS2)-containing protein processing and facilitates peroxisome matrix protein import. This is Lon protease homolog 2, peroxisomal from Emericella nidulans (strain FGSC A4 / ATCC 38163 / CBS 112.46 / NRRL 194 / M139) (Aspergillus nidulans).